The sequence spans 141 residues: Hemoglobin subunit alpha (141 aa).

Residues 1–141 enclose the Globin domain; sequence VLSPADKTNI…VSTVLTSKYR (141 aa). The residue at position 3 (Ser-3) is a Phosphoserine. Lys-7 is modified (N6-succinyllysine). Residue Thr-8 is modified to Phosphothreonine. The residue at position 11 (Lys-11) is an N6-succinyllysine. Lys-16 bears the N6-acetyllysine; alternate mark. Lys-16 is subject to N6-succinyllysine; alternate. Tyr-24 carries the post-translational modification Phosphotyrosine. A Phosphoserine modification is found at Ser-35. Lys-40 is modified (N6-succinyllysine). Ser-49 carries the post-translational modification Phosphoserine. His-58 lines the O2 pocket. Residue His-87 participates in heme b binding. Ser-102 is subject to Phosphoserine. Thr-108 carries the phosphothreonine modification. Phosphoserine is present on Ser-124. Phosphothreonine occurs at positions 134 and 137. A Phosphoserine modification is found at Ser-138.

Belongs to the globin family. As to quaternary structure, heterotetramer of two alpha chains and two beta chains. Red blood cells.

Functionally, involved in oxygen transport from the lung to the various peripheral tissues. Its function is as follows. Hemopressin acts as an antagonist peptide of the cannabinoid receptor CNR1. Hemopressin-binding efficiently blocks cannabinoid receptor CNR1 and subsequent signaling. This Chrysocyon brachyurus (Maned wolf) protein is Hemoglobin subunit alpha (HBA).